The following is a 174-amino-acid chain: Squamosa promoter-binding-like protein 4 (174 aa).

The tract at residues methionine 1–arginine 42 is disordered. Over residues valine 19 to valine 33 the composition is skewed to acidic residues. The SBP-type zinc finger occupies leucine 51–serine 128. Residues cysteine 54, cysteine 59, cysteine 76, histidine 79, cysteine 95, cysteine 98, histidine 102, and cysteine 114 each coordinate Zn(2+). The short motif at lysine 111 to lysine 127 is the Bipartite nuclear localization signal element. Residues leucine 118–lysine 127 are compositionally biased toward basic residues. Disordered stretches follow at residues leucine 118–valine 148 and serine 155–arginine 174. Residues methionine 163–arginine 174 are compositionally biased toward polar residues.

It depends on Zn(2+) as a cofactor. In terms of tissue distribution, expressed in the rib meristem and inter-primordial tissue of the inflorescence apex.

The protein localises to the nucleus. It is found in the cytoplasm. Functionally, trans-acting factor that binds specifically to the consensus nucleotide sequence 5'-TNCGTACAA-3' of AP1 promoter. Promotes both vegetative phase change and flowering. This chain is Squamosa promoter-binding-like protein 4 (SPL4), found in Arabidopsis thaliana (Mouse-ear cress).